The following is a 268-amino-acid chain: Microtubule-associated protein RP/EB family member 1 (268 aa).

N-acetylalanine is present on Ala2. The Calponin-homology (CH) domain maps to 14–116 (NLSRHDMLAW…FVQWFKKFFD (103 aa)). The residue at position 66 (Lys66) is an N6-crotonyllysine. Residue Tyr124 is modified to Phosphotyrosine. Residues 124–268 (YDPVAARQGQ…GGPQEEQEEY (145 aa)) are interaction with MTUS2/TIP150. The segment at 146–180 (LSKPKKPLGSSTAAPQRPIATQRTTAAPKAGPGMV) is disordered. Residues 154 to 170 (GSSTAAPQRPIATQRTT) show a composition bias toward polar residues. At Ser155 the chain carries Phosphoserine. Residues 185–255 (GVGNGDDEAA…LYATDEGFVI (71 aa)) enclose the EB1 C-terminal domain. Positions 206–211 (TVEDLE) are interaction with APC. Positions 208–268 (EDLEKERDFY…GGPQEEQEEY (61 aa)) are DCTN1-binding. Lys220 carries the N6-acetyllysine modification. Positions 220–242 (KLRNIELICQENEGENDPVLQRI) are APC-binding. Positions 232–255 (EGENDPVLQRIVDILYATDEGFVI) are interaction with SKA1.

This sequence belongs to the MAPRE family. In terms of assembly, homodimer. Heterodimer with MAPRE3. Interacts (via C-terminal residues 206-211) with APC (via C-terminal residues 2674-2845); the interaction inhibits association with and bundling of F-actin. Interacts with DCTN1, DIAPH1 and DIAPH2. Interacts with DCTN2, TERF1 and dynein intermediate chain. Interacts with CLASP2, DST, KIF2C and STIM1; probably required for their targeting to the growing microtubule plus ends. Interacts with MTUS2; interaction is direct and probably targets MTUS2 to microtubules. Interacts (via C-terminus) with SKA1 (via SXIP motif); the interaction is direct and stabilizes the kinetochore-microtubule attachment of the SKA1 complex. Interacts with APC2. Interacts with CLASP1. Interacts (via C-terminus) with CLIP1. Interacts with SLAIN2 and SLAIN1. Interacts with MACF1. Interacts with KIF18B; this interaction is required for efficient accumulation of KIF18B at microtubule plus ends. Interacts with MISP. Interacts with RABL2/RABL2A; binds preferentially to GTP-bound RABL2. Interacts with KCNAB2. Interacts with KNSTRN. Interacts with NCKAP5L. Interacts with AKAP9. Interacts with PDE4DIP isoform 2/MMG8/SMYLE; this interaction is required for its recruitment to the Golgi apparatus. May form a pericentrosomal complex with AKAP9, CDK5RAP2 and PDE4DIP isoform 2/MMG8/SMYLE; within this complex, MAPRE1 binding to CDK5RAP2 may be mediated by PDE4DIP. Contrary to other mammalian species, does not interact with CDK5RAP2, possibly due to the lack of conservation of the MAPRE1-binding motif in mouse CDK5RAP2. Interacts with AKNA. Interacts with GAS2L1, GAS2L2, and GAS2L3. Interacts with RARRES1 and AGBL2. In terms of processing, acetylation at Lys-220 by KAT2B/PCAF promotes dynamic kinetochore-microtubule interactions in early mitosis. Crotonylated by KAT5 during mitosis, promoting astral microtubule plasticity and dynamic connection between astral microtubules and the cortex during mitotic chromosome segregation, thereby ensuring accurate spindle positioning in mitosis. Decrotonylated by HDAC3. Expressed within the midpiece of sperm tail (at protein level).

The protein resides in the cytoplasm. It is found in the cytoskeleton. Its subcellular location is the microtubule organizing center. It localises to the centrosome. The protein localises to the spindle. The protein resides in the spindle pole. Its function is as follows. Plus-end tracking protein (+TIP) that binds to the plus-end of microtubules and regulates the dynamics of the microtubule cytoskeleton. Recruits other +TIP proteins to microtubules by binding to a conserved Ser-X-Leu-Pro (SXLP) motif in their polypeptide chains. Promotes cytoplasmic microtubule nucleation and elongation. Involved in mitotic spindle positioning by stabilizing microtubules and promoting dynamic connection between astral microtubules and the cortex during mitotic chromosome segregation. Assists chromosome alignment in metaphase by recruiting the SKA complex to the spindle and stabilizing its interactions with microtubule bundles (K-fibers). Also acts as a regulator of minus-end microtubule organization: interacts with the complex formed by AKAP9 and PDE4DIP, leading to recruit CAMSAP2 to the Golgi apparatus, thereby tethering non-centrosomal minus-end microtubules to the Golgi, an important step for polarized cell movement. Promotes elongation of CAMSAP2-decorated microtubule stretches on the minus-end of microtubules. Acts as a regulator of autophagosome transport via interaction with CAMSAP2. Functions downstream of Rho GTPases and DIAPH1 in stable microtubule formation. May play a role in cell migration. The protein is Microtubule-associated protein RP/EB family member 1 (Mapre1) of Mus musculus (Mouse).